A 455-amino-acid polypeptide reads, in one-letter code: Deoxyribodipyrimidine photo-lyase (455 aa).

One can recognise a Photolyase/cryptochrome alpha/beta domain in the interval 2 to 131 (SVAVVLFTSD…ELHVHDAVVT (130 aa)). Residues tyrosine 219 and 231–235 (TSRLS) contribute to the FAD site. Interaction with DNA regions lie at residues 266 to 273 (QLAWRDFH) and 330 to 331 (NR). 361–363 (DGD) is an FAD binding site. Glutamine 392 contacts DNA.

The protein belongs to the DNA photolyase class-1 family. In terms of assembly, monomer. It depends on FAD as a cofactor. Requires coenzyme F420-(gamma-Glu)n as cofactor.

The enzyme catalyses cyclobutadipyrimidine (in DNA) = 2 pyrimidine residues (in DNA).. In terms of biological role, involved in repair of UV radiation-induced DNA damage. Catalyzes the light-dependent monomerization (300-600 nm) of cyclobutyl pyrimidine dimers (in cis-syn configuration), which are formed between adjacent bases on the same DNA strand upon exposure to ultraviolet radiation. This is Deoxyribodipyrimidine photo-lyase (phr) from Streptomyces griseus.